A 404-amino-acid polypeptide reads, in one-letter code: MREAPHVLGIVLAGGEGKRLYPLTADRAKPAVPFGGAYRLIDFVLSNLVNARYLRICVLTQYKSHSLDRHISQNWRLSGLAGEYITPVPAQQRLGPRWYTGSADAIYQSLNLIYDEDPDYIVVFGADHVYRMDPEQMVRFHIDSGAGVTVAGIRVPRADASAFGCIDADDAGTIRDFVEKPLEPPGTPDDPTSTFVSMGNYVFTTKVLIDAIRADADDDHSDHDMGGDIIPRLVADGMAVVYDFSNNEVPGATDRDRAYWRDVGTLDAFYDAHMDLVSVHPVFNLYNKRWPIRGESENLAPAKFVNGGSAQESVVGAGSIISAASVRNSVLSSNVVVEDGAIVEGSVIMPGARVGRDAVVRHAILDKNVVVGPGEMVGVDLDKDRERFAISAGGVVAVGKGVWI.

Alpha-D-glucose 1-phosphate-binding positions include Tyr-99, Gly-164, 179-180 (EK), and Ser-197.

It belongs to the bacterial/plant glucose-1-phosphate adenylyltransferase family.

The enzyme catalyses alpha-D-glucose 1-phosphate + ATP + H(+) = ADP-alpha-D-glucose + diphosphate. The protein operates within capsule biogenesis; capsule polysaccharide biosynthesis. Its pathway is glycan biosynthesis; glycogen biosynthesis. Its function is as follows. Involved in the biosynthesis of ADP-glucose, a building block, required in the biosynthesis of maltose-1-phosphate (M1P) and in the elongation reactions to produce linear alpha-1,4-glucans. Catalyzes the reaction between ATP and alpha-D-glucose 1-phosphate (G1P) to produce pyrophosphate and ADP-Glc. In Mycobacterium ulcerans (strain Agy99), this protein is Glucose-1-phosphate adenylyltransferase.